The primary structure comprises 212 residues: Histone H1.2 (212 aa).

The segment covering Met-1–Lys-17 has biased composition (low complexity). The segment at Met-1 to Ser-41 is disordered. Ser-2 carries the post-translational modification N-acetylserine. Ser-2 is modified (phosphoserine). Lys-17 carries the post-translational modification N6-acetyllysine. Residues Ala-20 to Ala-35 are compositionally biased toward basic residues. N6-(2-hydroxyisobutyryl)lysine is present on residues Lys-23, Lys-26, and Lys-27. Lys-34 is subject to N6-(beta-hydroxybutyryl)lysine; alternate. Lys-34 is subject to N6-crotonyllysine; alternate. Lys-34 is modified (N6-methyllysine; alternate). The 74-residue stretch at Ser-36–Lys-109 folds into the H15 domain. Lys-46 carries the N6-(2-hydroxyisobutyryl)lysine modification. An N6-(beta-hydroxybutyryl)lysine; alternate modification is found at Lys-52. At Lys-52 the chain carries N6-(2-hydroxyisobutyryl)lysine; alternate. Arg-54 is modified (citrulline). Lys-63 bears the N6-(2-hydroxyisobutyryl)lysine mark. Position 64 is an N6-(beta-hydroxybutyryl)lysine; alternate (Lys-64). An N6-crotonyllysine; alternate modification is found at Lys-64. Lys-64 carries the post-translational modification N6-(2-hydroxyisobutyryl)lysine; alternate. N6-(2-hydroxyisobutyryl)lysine is present on residues Lys-75 and Lys-81. An N6-(beta-hydroxybutyryl)lysine; alternate mark is found at Lys-85 and Lys-90. Lys-85, Lys-90, and Lys-97 each carry N6-crotonyllysine; alternate. Lys-85, Lys-90, and Lys-97 each carry N6-(2-hydroxyisobutyryl)lysine; alternate. Position 97 is an N6-succinyllysine; alternate (Lys-97). The tract at residues Gly-98 to Lys-212 is disordered. At Ser-104 the chain carries Phosphoserine; by PKC. Lys-106 carries the N6-(beta-hydroxybutyryl)lysine modification. Lys-110, Lys-117, Lys-121, Lys-129, and Lys-136 each carry N6-(2-hydroxyisobutyryl)lysine. Over residues Lys-121–Lys-148 the composition is skewed to low complexity. At Thr-146 the chain carries Phosphothreonine. An N6-(2-hydroxyisobutyryl)lysine modification is found at Lys-148. The span at Lys-149–Lys-160 shows a compositional bias: basic residues. Residues Lys-159 and Lys-168 each carry the N6-crotonyllysine; alternate modification. N6-(2-hydroxyisobutyryl)lysine; alternate is present on residues Lys-159 and Lys-168. A compositionally biased stretch (basic residues) spans Lys-169–Lys-212. N6-methyllysine; by EHMT1 and EHMT2 is present on Lys-186. Ser-187 bears the ADP-ribosylserine mark. At Lys-212 the chain carries N6-(2-hydroxyisobutyryl)lysine.

The protein belongs to the histone H1/H5 family. Interacts with TSC22D1 isoform 2. Post-translationally, H1 histones are progressively phosphorylated during the cell cycle, becoming maximally phosphorylated during late G2 phase and M phase, and being dephosphorylated sharply thereafter. In terms of processing, crotonylation (Kcr) is specifically present in male germ cells and marks testis-specific genes in post-meiotic cells, including X-linked genes that escape sex chromosome inactivation in haploid cells. Crotonylation marks active promoters and enhancers and confers resistance to transcriptional repressors. It is also associated with post-meiotically activated genes on autosomes. ADP-ribosylated on Ser-187 in response to DNA damage. Post-translationally, citrullination at Arg-54 (H1R54ci) by PADI4 takes place within the DNA-binding site of H1 and results in its displacement from chromatin and global chromatin decondensation, thereby promoting pluripotency and stem cell maintenance. In terms of processing, hydroxybutyrylation of histones is induced by starvation.

It is found in the nucleus. It localises to the chromosome. Functionally, histone H1 protein binds to linker DNA between nucleosomes forming the macromolecular structure known as the chromatin fiber. Histones H1 are necessary for the condensation of nucleosome chains into higher-order structured fibers. Also acts as a regulator of individual gene transcription through chromatin remodeling, nucleosome spacing and DNA methylation. In Mus musculus (Mouse), this protein is Histone H1.2.